The primary structure comprises 498 residues: ATP synthase subunit beta, chloroplastic (498 aa).

Residue 172 to 179 (GGAGVGKT) participates in ATP binding.

The protein belongs to the ATPase alpha/beta chains family. In terms of assembly, F-type ATPases have 2 components, CF(1) - the catalytic core - and CF(0) - the membrane proton channel. CF(1) has five subunits: alpha(3), beta(3), gamma(1), delta(1), epsilon(1). CF(0) has four main subunits: a(1), b(1), b'(1) and c(9-12).

It localises to the plastid. Its subcellular location is the chloroplast thylakoid membrane. The enzyme catalyses ATP + H2O + 4 H(+)(in) = ADP + phosphate + 5 H(+)(out). Produces ATP from ADP in the presence of a proton gradient across the membrane. The catalytic sites are hosted primarily by the beta subunits. This chain is ATP synthase subunit beta, chloroplastic, found in Hyphaene coriacea (Ilala palm).